The primary structure comprises 481 residues: Phosphoglycerate kinase, chloroplastic (481 aa).

The N-terminal 75 residues, 1–75, are a transit peptide targeting the chloroplast; that stretch reads MASATASHTL…SSKPIRGVAS (75 aa). Alanine 98, aspartate 99, asparagine 101, arginine 115, serine 137, histidine 138, glycine 140, arginine 141, arginine 196, histidine 228, and arginine 229 together coordinate (2R)-3-phosphoglycerate. Glycine 274 serves as a coordination point for ADP. Residue glycine 274 participates in CDP binding. The AMP site is built by lysine 276 and lysine 280. Lysine 280 contributes to the ATP binding site. Glycine 298 lines the ADP pocket. Position 298 (glycine 298) interacts with CDP. Glycine 299 and glycine 371 together coordinate AMP. Positions 299 and 371 each coordinate ATP. CDP-binding residues include glycine 396 and phenylalanine 401. Phenylalanine 401 is a binding site for ADP. Position 402 (glutamate 402) interacts with AMP. Positions 402, 433, and 434 each coordinate ATP. Aspartate 433 contacts Mg(2+).

It belongs to the phosphoglycerate kinase family. Monomer. It depends on Mg(2+) as a cofactor.

The protein localises to the plastid. It is found in the chloroplast. The enzyme catalyses (2R)-3-phosphoglycerate + ATP = (2R)-3-phospho-glyceroyl phosphate + ADP. The protein operates within carbohydrate biosynthesis; Calvin cycle. In Nicotiana tabacum (Common tobacco), this protein is Phosphoglycerate kinase, chloroplastic.